The sequence spans 262 residues: DNA repair protein RecO (262 aa).

Belongs to the RecO family.

In terms of biological role, involved in DNA repair and RecF pathway recombination. In Acidovorax ebreus (strain TPSY) (Diaphorobacter sp. (strain TPSY)), this protein is DNA repair protein RecO.